A 196-amino-acid chain; its full sequence is Peptidyl-tRNA hydrolase (196 aa).

Tyrosine 18 contributes to the tRNA binding site. Histidine 23 serves as the catalytic Proton acceptor. TRNA contacts are provided by phenylalanine 69, asparagine 71, and asparagine 117.

It belongs to the PTH family. In terms of assembly, monomer.

Its subcellular location is the cytoplasm. The enzyme catalyses an N-acyl-L-alpha-aminoacyl-tRNA + H2O = an N-acyl-L-amino acid + a tRNA + H(+). Hydrolyzes ribosome-free peptidyl-tRNAs (with 1 or more amino acids incorporated), which drop off the ribosome during protein synthesis, or as a result of ribosome stalling. In terms of biological role, catalyzes the release of premature peptidyl moieties from peptidyl-tRNA molecules trapped in stalled 50S ribosomal subunits, and thus maintains levels of free tRNAs and 50S ribosomes. The protein is Peptidyl-tRNA hydrolase of Vibrio vulnificus (strain CMCP6).